Here is a 501-residue protein sequence, read N- to C-terminus: Glutamate--tRNA ligase (501 aa).

A 'HIGH' region motif is present at residues 10–20 (PSPTGSLHIGG). The 'KMSKS' region motif lies at 251–255 (KLSKR). An ATP-binding site is contributed by Lys254.

It belongs to the class-I aminoacyl-tRNA synthetase family. Glutamate--tRNA ligase type 1 subfamily. As to quaternary structure, monomer.

It is found in the cytoplasm. The enzyme catalyses tRNA(Glu) + L-glutamate + ATP = L-glutamyl-tRNA(Glu) + AMP + diphosphate. Catalyzes the attachment of glutamate to tRNA(Glu) in a two-step reaction: glutamate is first activated by ATP to form Glu-AMP and then transferred to the acceptor end of tRNA(Glu). In Desulforudis audaxviator (strain MP104C), this protein is Glutamate--tRNA ligase.